We begin with the raw amino-acid sequence, 256 residues long: Pimeloyl-[acyl-carrier protein] methyl ester esterase (256 aa).

Residues 15–242 enclose the AB hydrolase-1 domain; it reads HLVLLHGWGL…AAHAPFISHP (228 aa). Residues Trp-22, 82-83, and 143-147 contribute to the substrate site; these read SL and FLALQ. Catalysis depends on Ser-82, which acts as the Nucleophile. Catalysis depends on residues Asp-207 and His-235. Position 235 (His-235) interacts with substrate.

Belongs to the AB hydrolase superfamily. Carboxylesterase BioH family. Monomer.

It is found in the cytoplasm. The catalysed reaction is 6-carboxyhexanoyl-[ACP] methyl ester + H2O = 6-carboxyhexanoyl-[ACP] + methanol + H(+). The protein operates within cofactor biosynthesis; biotin biosynthesis. The physiological role of BioH is to remove the methyl group introduced by BioC when the pimeloyl moiety is complete. It allows to synthesize pimeloyl-ACP via the fatty acid synthetic pathway through the hydrolysis of the ester bonds of pimeloyl-ACP esters. The chain is Pimeloyl-[acyl-carrier protein] methyl ester esterase from Escherichia coli (strain K12 / MC4100 / BW2952).